Reading from the N-terminus, the 681-residue chain is Macrolide export ATP-binding/permease protein MacB (681 aa).

In terms of domain architecture, ABC transporter spans 6 to 244; sequence LKLAAVTRRF…FAEVGVGAAA (239 aa). Position 42–49 (42–49) interacts with ATP; sequence GASGSGKS. The disordered stretch occupies residues 246–274; that stretch reads TETAADTRSAPASGDAPPPANNDTAADPA. 4 helical membrane-spanning segments follow: residues 306 to 326, 554 to 574, 611 to 631, and 644 to 664; these read LLTM…VAVG, LTLL…IGVM, LVCL…GALF, and AGAI…FGFM.

This sequence belongs to the ABC transporter superfamily. Macrolide exporter (TC 3.A.1.122) family. As to quaternary structure, homodimer.

Its subcellular location is the cell inner membrane. Non-canonical ABC transporter that contains transmembrane domains (TMD), which form a pore in the inner membrane, and an ATP-binding domain (NBD), which is responsible for energy generation. Confers resistance against macrolides. The protein is Macrolide export ATP-binding/permease protein MacB of Burkholderia cenocepacia (strain HI2424).